A 649-amino-acid chain; its full sequence is DNA mismatch repair protein MutL (649 aa).

The interval 339-414 (KKKTKDESVQ…VREEESWQST (76 aa)) is disordered. Residues 342-360 (TKDESVQEQFHFEHTKPKE) show a composition bias toward basic and acidic residues. The span at 388–402 (PQLWQQPKQEWQPPQ) shows a compositional bias: low complexity.

It belongs to the DNA mismatch repair MutL/HexB family.

Its function is as follows. This protein is involved in the repair of mismatches in DNA. It is required for dam-dependent methyl-directed DNA mismatch repair. May act as a 'molecular matchmaker', a protein that promotes the formation of a stable complex between two or more DNA-binding proteins in an ATP-dependent manner without itself being part of a final effector complex. This is DNA mismatch repair protein MutL from Bacillus cytotoxicus (strain DSM 22905 / CIP 110041 / 391-98 / NVH 391-98).